The primary structure comprises 44 residues: Cytochrome b559 subunit beta (44 aa).

The helical transmembrane segment at tryptophan 19 to alanine 35 threads the bilayer. A heme-binding site is contributed by histidine 23.

It belongs to the PsbE/PsbF family. Heterodimer of an alpha subunit and a beta subunit. PSII is composed of 1 copy each of membrane proteins PsbA, PsbB, PsbC, PsbD, PsbE, PsbF, PsbH, PsbI, PsbJ, PsbK, PsbL, PsbM, PsbT, PsbX, PsbY, PsbZ, Psb30/Ycf12, peripheral proteins PsbO, CyanoQ (PsbQ), PsbU, PsbV and a large number of cofactors. It forms dimeric complexes. It depends on heme b as a cofactor.

It localises to the cellular thylakoid membrane. Functionally, this b-type cytochrome is tightly associated with the reaction center of photosystem II (PSII). PSII is a light-driven water:plastoquinone oxidoreductase that uses light energy to abstract electrons from H(2)O, generating O(2) and a proton gradient subsequently used for ATP formation. It consists of a core antenna complex that captures photons, and an electron transfer chain that converts photonic excitation into a charge separation. The protein is Cytochrome b559 subunit beta of Gloeothece citriformis (strain PCC 7424) (Cyanothece sp. (strain PCC 7424)).